We begin with the raw amino-acid sequence, 677 residues long: Methionine--tRNA ligase (677 aa).

Positions 15-25 (PYANGPIHIGH) match the 'HIGH' region motif. Residues cysteine 146, cysteine 149, cysteine 159, and cysteine 162 each contribute to the Zn(2+) site. The 'KMSKS' region signature appears at 332 to 336 (KMSKS). An ATP-binding site is contributed by lysine 335. Residues 576–677 (DFAKVDLRVA…DGAKPGMRIM (102 aa)) enclose the tRNA-binding domain.

Belongs to the class-I aminoacyl-tRNA synthetase family. MetG type 1 subfamily. Homodimer. Zn(2+) is required as a cofactor.

The protein localises to the cytoplasm. The enzyme catalyses tRNA(Met) + L-methionine + ATP = L-methionyl-tRNA(Met) + AMP + diphosphate. Is required not only for elongation of protein synthesis but also for the initiation of all mRNA translation through initiator tRNA(fMet) aminoacylation. This chain is Methionine--tRNA ligase, found in Idiomarina loihiensis (strain ATCC BAA-735 / DSM 15497 / L2-TR).